The primary structure comprises 490 residues: Cytochrome P450 2C2 (490 aa).

Cys435 serves as a coordination point for heme.

It belongs to the cytochrome P450 family. It depends on heme as a cofactor.

It is found in the endoplasmic reticulum membrane. The protein resides in the microsome membrane. It catalyses the reaction an organic molecule + reduced [NADPH--hemoprotein reductase] + O2 = an alcohol + oxidized [NADPH--hemoprotein reductase] + H2O + H(+). Its function is as follows. Cytochromes P450 are a group of heme-thiolate monooxygenases. In liver microsomes, this enzyme is involved in an NADPH-dependent electron transport pathway. It oxidizes a variety of structurally unrelated compounds, including steroids, fatty acids, and xenobiotics. In the epoxidation of arachidonic acid it generates only 14,15- and 11,12-cis-epoxyeicosatrienoic acids. This Oryctolagus cuniculus (Rabbit) protein is Cytochrome P450 2C2 (CYP2C2).